Consider the following 504-residue polypeptide: 2-isopropylmalate synthase (504 aa).

The Pyruvate carboxyltransferase domain maps to 6–267; that stretch reads IIIFDTTLRD…YTGIISKEIY (262 aa). Residues Asp15, His201, His203, and Asn237 each coordinate Mn(2+). Residues 391–504 form a regulatory domain region; that stretch reads EITDLLQSSG…LNSYLRIHKN (114 aa).

Belongs to the alpha-IPM synthase/homocitrate synthase family. LeuA type 1 subfamily. Homodimer. Mn(2+) is required as a cofactor.

The protein resides in the cytoplasm. It catalyses the reaction 3-methyl-2-oxobutanoate + acetyl-CoA + H2O = (2S)-2-isopropylmalate + CoA + H(+). It participates in amino-acid biosynthesis; L-leucine biosynthesis; L-leucine from 3-methyl-2-oxobutanoate: step 1/4. Functionally, catalyzes the condensation of the acetyl group of acetyl-CoA with 3-methyl-2-oxobutanoate (2-ketoisovalerate) to form 3-carboxy-3-hydroxy-4-methylpentanoate (2-isopropylmalate). This is 2-isopropylmalate synthase from Campylobacter concisus (strain 13826).